Consider the following 36-residue polypeptide: Kappa-theraphotoxin-Pg1a (36 aa).

3 cysteine pairs are disulfide-bonded: C4-C19, C11-C24, and C18-C31.

Belongs to the neurotoxin 10 (Hwtx-1) family. 44 (Jztx-4) subfamily. As to expression, expressed by the venom gland.

The protein localises to the secreted. Its function is as follows. Gating modifier of Kv2.1/KCNB1 (IC(50)=5.1 nM), Kv2.2/KCNB2 and Kv4.3/KCND3 channels (IC(50)=39 nM). Acts by shifting the channel activation to more depolarized potentials by stabilizing the resting conformation of the voltage sensor. It completely inhibits opening of the Kv2.1/KCNB1 channel at negative membrane voltages and dramatically shifts channel activation to positive voltages. May act by partitioning into lipid membranes and then by binding the voltage sensor paddle of the channel from a place within the membrane. This chain is Kappa-theraphotoxin-Pg1a, found in Chilobrachys guangxiensis (Chinese earth tiger tarantula).